The primary structure comprises 212 residues: Adenylate kinase (212 aa).

10–15 (GAGKGT) serves as a coordination point for ATP. An NMP region spans residues 30–59 (STGDMFRAAMANQTEMGRLAKSYIDKGELV). AMP is bound by residues Thr31, Arg36, 57–59 (ELV), 86–89 (GYPR), and Gln93. The tract at residues 127-159 (GRIINRKTGETFHKVFNPPVDYKEEDYYQREDD) is LID. Residues Arg128 and 137–138 (TF) each bind ATP. AMP contacts are provided by Arg156 and Arg167. An ATP-binding site is contributed by Gln195.

The protein belongs to the adenylate kinase family. Monomer.

Its subcellular location is the cytoplasm. The enzyme catalyses AMP + ATP = 2 ADP. It participates in purine metabolism; AMP biosynthesis via salvage pathway; AMP from ADP: step 1/1. Functionally, catalyzes the reversible transfer of the terminal phosphate group between ATP and AMP. Plays an important role in cellular energy homeostasis and in adenine nucleotide metabolism. The sequence is that of Adenylate kinase from Streptococcus agalactiae serotype Ia (strain ATCC 27591 / A909 / CDC SS700).